Here is a 185-residue protein sequence, read N- to C-terminus: Probable NEDD8-conjugating enzyme Ubc12-like (185 aa).

The disordered stretch occupies residues 8–29 (KEKQREESQSNNGRGASTVKKQ). The segment covering 16–28 (QSNNGRGASTVKK) has biased composition (polar residues). The UBC core domain maps to 31-176 (AGELRLHKDI…VRRAMMGGQV (146 aa)). Catalysis depends on cysteine 114, which acts as the Glycyl thioester intermediate.

The protein belongs to the ubiquitin-conjugating enzyme family. UBC12 subfamily.

The protein operates within protein modification; protein neddylation. Functionally, accepts the ubiquitin-like protein NEDD8/RUB1 from the ECR1-AXR1 E1 complex and catalyzes its covalent attachment to other proteins. The sequence is that of Probable NEDD8-conjugating enzyme Ubc12-like (RCE2) from Arabidopsis thaliana (Mouse-ear cress).